A 311-amino-acid chain; its full sequence is tRNA dimethylallyltransferase (311 aa).

An ATP-binding site is contributed by 16–23 (GATASGKS). A substrate-binding site is contributed by 18–23 (TASGKS). 2 interaction with substrate tRNA regions span residues 41–44 (DSRQ) and 165–169 (QRLIR).

The protein belongs to the IPP transferase family. In terms of assembly, monomer. Mg(2+) is required as a cofactor.

It carries out the reaction adenosine(37) in tRNA + dimethylallyl diphosphate = N(6)-dimethylallyladenosine(37) in tRNA + diphosphate. Catalyzes the transfer of a dimethylallyl group onto the adenine at position 37 in tRNAs that read codons beginning with uridine, leading to the formation of N6-(dimethylallyl)adenosine (i(6)A). This Chlorobium chlorochromatii (strain CaD3) protein is tRNA dimethylallyltransferase.